A 43-amino-acid polypeptide reads, in one-letter code: CLAVATA3/ESR (CLE)-related protein 16D10 (43 aa).

The signal sequence occupies residues 1–30 (MFTNSIKNLIIYLMPLMVTLMLLSVSFVDA). Residues 31 to 43 (GKKPSGPNPGGNN) carry the CLE motif.

It belongs to the CLV3/ESR signal peptide family. Highly expressed exclusively within the subventral esophageal gland cell during syncytium formation in host plants.

The protein localises to the secreted. It is found in the host cytoplasm. It localises to the host extracellular space. In terms of biological role, plays a role in the differentiation or division of feeding cells (syncytia) induced in plant roots during infection. Promotes host root growth. This Meloidogyne arenaria (Peanut root-knot nematode) protein is CLAVATA3/ESR (CLE)-related protein 16D10 (16D10).